We begin with the raw amino-acid sequence, 88 residues long: Small ribosomal subunit protein bS20 (88 aa).

The disordered stretch occupies residues 1 to 23; sequence MANSPQAKKRARQNDKARAHNAS.

It belongs to the bacterial ribosomal protein bS20 family.

In terms of biological role, binds directly to 16S ribosomal RNA. The protein is Small ribosomal subunit protein bS20 of Teredinibacter turnerae (strain ATCC 39867 / T7901).